The chain runs to 326 residues: Probable cell division protein WhiA (326 aa).

A DNA-binding region (H-T-H motif) is located at residues Ser-275–Ser-308.

This sequence belongs to the WhiA family.

Involved in cell division and chromosome segregation. The protein is Probable cell division protein WhiA of Beutenbergia cavernae (strain ATCC BAA-8 / DSM 12333 / CCUG 43141 / JCM 11478 / NBRC 16432 / NCIMB 13614 / HKI 0122).